The following is a 602-amino-acid chain: Elongation factor 4 (602 aa).

One can recognise a tr-type G domain in the interval 2-184; sequence NHIRNFSIIA…LIVAKVPAPR (183 aa). Residues 14 to 19 and 131 to 134 each bind GTP; these read DHGKST and NKMD.

Belongs to the TRAFAC class translation factor GTPase superfamily. Classic translation factor GTPase family. LepA subfamily.

It is found in the cell inner membrane. It carries out the reaction GTP + H2O = GDP + phosphate + H(+). In terms of biological role, required for accurate and efficient protein synthesis under certain stress conditions. May act as a fidelity factor of the translation reaction, by catalyzing a one-codon backward translocation of tRNAs on improperly translocated ribosomes. Back-translocation proceeds from a post-translocation (POST) complex to a pre-translocation (PRE) complex, thus giving elongation factor G a second chance to translocate the tRNAs correctly. Binds to ribosomes in a GTP-dependent manner. This Paracidovorax citrulli (strain AAC00-1) (Acidovorax citrulli) protein is Elongation factor 4.